The primary structure comprises 327 residues: Ferredoxin--NADP reductase (327 aa).

Thr18, Asp37, Gln45, Tyr50, Ala90, Phe124, Asp283, and Ser324 together coordinate FAD.

This sequence belongs to the ferredoxin--NADP reductase type 2 family. Homodimer. FAD serves as cofactor.

The enzyme catalyses 2 reduced [2Fe-2S]-[ferredoxin] + NADP(+) + H(+) = 2 oxidized [2Fe-2S]-[ferredoxin] + NADPH. The protein is Ferredoxin--NADP reductase of Saccharopolyspora erythraea (strain ATCC 11635 / DSM 40517 / JCM 4748 / NBRC 13426 / NCIMB 8594 / NRRL 2338).